We begin with the raw amino-acid sequence, 563 residues long: Probable terpene synthase 4 (563 aa).

Positions 316, 320, and 469 each coordinate Mg(2+). The short motif at 316–320 (DDIFD) is the DDXXD motif element.

This sequence belongs to the terpene synthase family. Mg(2+) serves as cofactor.

In terms of biological role, probable sesquiterpene synthase. The protein is Probable terpene synthase 4 (TPS4) of Ricinus communis (Castor bean).